The sequence spans 356 residues: Tyrosine recombinase XerS (356 aa).

Positions 16–121 (LMPWYVLEYY…ALSSLYKYLT (106 aa)) constitute a Core-binding (CB) domain. The Tyr recombinase domain maps to 169 to 354 (GFLTYIDQEH…VSDEQKNALD (186 aa)). Catalysis depends on residues Arg210, Lys234, His306, Arg309, and His332. Residue Tyr341 is the O-(3'-phospho-DNA)-tyrosine intermediate of the active site.

The protein belongs to the 'phage' integrase family. XerS subfamily.

It localises to the cytoplasm. FtsK is required for recombination. Its function is as follows. Site-specific tyrosine recombinase, which acts by catalyzing the cutting and rejoining of the recombining DNA molecules. Essential to convert dimers of the bacterial chromosome into monomers to permit their segregation at cell division. The polypeptide is Tyrosine recombinase XerS (Streptococcus pneumoniae (strain 70585)).